We begin with the raw amino-acid sequence, 451 residues long: Probable V-type proton ATPase subunit H 1 (451 aa).

The protein belongs to the V-ATPase H subunit family. As to quaternary structure, V-ATPase is a heteromultimeric enzyme made up of two complexes: the ATP-hydrolytic V1 complex and the proton translocation V0 complex. The V1 complex consists of three catalytic AB heterodimers that form a heterohexamer, three peripheral stalks each consisting of EG heterodimers, one central rotor including subunits D and F, and the regulatory subunits C and H. The proton translocation complex V0 consists of the proton transport subunit a, a ring of proteolipid subunits c9c'', rotary subunit d, subunits e and f, and the accessory subunits vah-19/Ac45 and vah-20/PRR.

Functionally, subunit of the V1 complex of vacuolar(H+)-ATPase (V-ATPase), a multisubunit enzyme composed of a peripheral complex (V1) that hydrolyzes ATP and a membrane integral complex (V0) that translocates protons. V-ATPase is responsible for acidifying and maintaining the pH of intracellular compartments and in some cell types, is targeted to the plasma membrane, where it is responsible for acidifying the extracellular environment. Subunit H is essential for V-ATPase activity, but not for the assembly of the complex. The sequence is that of Probable V-type proton ATPase subunit H 1 from Caenorhabditis elegans.